Consider the following 1453-residue polypeptide: ABC transporter G family member 34 (1453 aa).

The segment at 1-24 (MLGRDEDLVRTMSGRGSLGSTSHR) is disordered. In terms of domain architecture, ABC transporter 1 spans 173 to 446 (LGLFHLLPSK…FEYMGFKCPE (274 aa)). Residue 206–213 (GPPSSGKT) participates in ATP binding. An ABC transmembrane type-2 1 domain is found at 524–737 (DLFKACFDRE…GQTALVINEF (214 aa)). The next 6 helical transmembrane spans lie at 542 to 562 (FVYV…MTVY), 582 to 602 (LFFS…FTVM), 621 to 641 (FALP…VIWI), 661 to 681 (LLAY…LGAL), 687 to 707 (IANS…GFII), and 773 to 793 (FWIC…CYII). Positions 852–1105 (LAFNNVNYYV…LVEYFEAIEG (254 aa)) constitute an ABC transporter 2 domain. Position 897–904 (897–904 (GVSGAGKT)) interacts with ATP. Residues 1177-1391 (TQTKACFWKM…TLYGIITSQV (215 aa)) form the ABC transmembrane type-2 2 domain. The next 7 helical transmembrane spans lie at 1196–1216 (YNAI…LLFW), 1230–1250 (NFFG…AATV), 1289–1309 (IQTG…WTVV), 1311–1331 (FFWF…YGMM), 1341–1361 (IAGI…GFLI), 1366–1386 (IPIW…LYGI), and 1422–1442 (FLPV…FAFA).

The protein belongs to the ABC transporter superfamily. ABCG family. PDR (TC 3.A.1.205) subfamily. Expressed in roots at low levels.

Its subcellular location is the membrane. May be a general defense protein. The polypeptide is ABC transporter G family member 34 (ABCG34) (Arabidopsis thaliana (Mouse-ear cress)).